A 239-amino-acid chain; its full sequence is Small ribosomal subunit protein uS3 (239 aa).

The region spanning 39-107 (VRQVLRKKMS…PVHINVIEVR (69 aa)) is the KH type-2 domain. The tract at residues 214-239 (SQEKQDDGSRGDRNADRSSRRSREVR) is disordered. A compositionally biased stretch (basic and acidic residues) spans 216 to 239 (EKQDDGSRGDRNADRSSRRSREVR).

Belongs to the universal ribosomal protein uS3 family. In terms of assembly, part of the 30S ribosomal subunit. Forms a tight complex with proteins S10 and S14.

Binds the lower part of the 30S subunit head. Binds mRNA in the 70S ribosome, positioning it for translation. In Xylella fastidiosa (strain M23), this protein is Small ribosomal subunit protein uS3.